The sequence spans 269 residues: Formamidopyrimidine-DNA glycosylase (269 aa).

Proline 2 (schiff-base intermediate with DNA) is an active-site residue. The Proton donor role is filled by glutamate 3. Catalysis depends on lysine 57, which acts as the Proton donor; for beta-elimination activity. DNA contacts are provided by histidine 90, arginine 109, and lysine 150. The FPG-type zinc-finger motif lies at 235 to 269 (QVYGREGEPCRVCGTPILAGKHAQRRTYWCRRCQK). The active-site Proton donor; for delta-elimination activity is arginine 259.

The protein belongs to the FPG family. Monomer. The cofactor is Zn(2+).

The enzyme catalyses Hydrolysis of DNA containing ring-opened 7-methylguanine residues, releasing 2,6-diamino-4-hydroxy-5-(N-methyl)formamidopyrimidine.. It carries out the reaction 2'-deoxyribonucleotide-(2'-deoxyribose 5'-phosphate)-2'-deoxyribonucleotide-DNA = a 3'-end 2'-deoxyribonucleotide-(2,3-dehydro-2,3-deoxyribose 5'-phosphate)-DNA + a 5'-end 5'-phospho-2'-deoxyribonucleoside-DNA + H(+). Functionally, involved in base excision repair of DNA damaged by oxidation or by mutagenic agents. Acts as a DNA glycosylase that recognizes and removes damaged bases. Has a preference for oxidized purines, such as 7,8-dihydro-8-oxoguanine (8-oxoG). Has AP (apurinic/apyrimidinic) lyase activity and introduces nicks in the DNA strand. Cleaves the DNA backbone by beta-delta elimination to generate a single-strand break at the site of the removed base with both 3'- and 5'-phosphates. The protein is Formamidopyrimidine-DNA glycosylase of Cronobacter sakazakii (strain ATCC BAA-894) (Enterobacter sakazakii).